Here is a 124-residue protein sequence, read N- to C-terminus: MSGRGKGGKAKGKSKTRSSRAGLQFPVGRIHRLLRKGNYAERVGAGAPVYLAAVMEYLAAEVLELAGNAARDNKKTRIIPRHLQLAIRNDEELNKLLSGVTIAQGGVLPNIQAVLLPKKTTKAK.

Residues 1–18 are compositionally biased toward basic residues; that stretch reads MSGRGKGGKAKGKSKTRS. The tract at residues 1–23 is disordered; sequence MSGRGKGGKAKGKSKTRSSRAGL. Serine 2 carries the N-acetylserine modification. The residue at position 2 (serine 2) is a Phosphoserine. The residue at position 104 (glutamine 104) is an N5-methylglutamine.

This sequence belongs to the histone H2A family. As to quaternary structure, the nucleosome is a histone octamer containing two molecules each of H2A, H2B, H3 and H4 assembled in one H3-H4 heterotetramer and two H2A-H2B heterodimers. The octamer wraps approximately 147 bp of DNA. Phosphorylation of Ser-2 directly represses transcription.

It localises to the nucleus. Its subcellular location is the chromosome. Core component of nucleosome. Nucleosomes wrap and compact DNA into chromatin, limiting DNA accessibility to the cellular machineries which require DNA as a template. Histones thereby play a central role in transcription regulation, DNA repair, DNA replication and chromosomal stability. DNA accessibility is regulated via a complex set of post-translational modifications of histones, also called histone code, and nucleosome remodeling. This chain is Histone H2A, found in Platynereis dumerilii (Dumeril's clam worm).